The chain runs to 498 residues: DEAD-box ATP-dependent RNA helicase 12 (498 aa).

The interval 1–114 (MNTNRGRYPP…RLPPPDTRYQ (114 aa)) is disordered. Residues 27–65 (SYRQQQPPQDQQYVQRGYSQNPQQMQLQQQHQQQQQQQQ) are compositionally biased toward low complexity. Polar residues predominate over residues 74–96 (GNASNANEVVQQTTQPEASSDAN). Positions 124 to 152 (NEFEDYFLKRDLLKGIYEKGFEKPSPIQE) match the Q motif motif. Positions 155–325 (IPIALTGSDI…DRHLRKPYVI (171 aa)) constitute a Helicase ATP-binding domain. 168–175 (AKNGTGKT) serves as a coordination point for ATP. T230 is subject to Phosphothreonine. A DEAD box motif is present at residues 273–276 (DEAD). Residues 335 to 495 (GVTQYYAFVE…PIPSNIDQAI (161 aa)) enclose the Helicase C-terminal domain.

It belongs to the DEAD box helicase family. DDX6/DHH1 subfamily.

Its subcellular location is the cytoplasm. It is found in the P-body. The enzyme catalyses ATP + H2O = ADP + phosphate + H(+). Functionally, ATP-dependent RNA helicase involved in mRNA turnover, and more specifically in mRNA decapping. The polypeptide is DEAD-box ATP-dependent RNA helicase 12 (RH12) (Arabidopsis thaliana (Mouse-ear cress)).